The sequence spans 689 residues: Centrosomal protein of 78 kDa (689 aa).

2 positions are modified to phosphoserine: S325 and S327. 3 disordered regions span residues 432–451 (SSEVEEVDDSSESVHEVPEK), 563–589 (PQMTSTVSNPPKEEKKALEDEKPEPKQ), and 614–689 (DSFP…TESH). Residues 450-505 (EKTSIEQEALQEKLEECLKQLKEERVIRLKVDKRVSELEHENAQLRNINFSLSEAL) are a coiled coil. Basic and acidic residues-rich tracts occupy residues 573–587 (PKEEKKALEDEKPEP) and 666–689 (QRKEEELSRNSRSSSEKKTKTESH).

This sequence belongs to the CEP78 family. As to quaternary structure, interacts with PLK4. Interacts with FAM161A. Interacts with IFT20; regulating IFT20 stability and localization. Interacts with TTC21A; regulating TTC21A stability and localization. Interacts with USP16; promoting USP16-dependent deubiquitination of tektins. Interacts with DCAF1/VPRBP; promoting localization of the EDVP complex to centrosomes. Interacts with CEP350; promoting CEP78 localization to centrosome and centriole. Widely expressed. Expressed in different retinal cell types with higher expression in cone compared to rod cells (at protein level).

The protein resides in the cytoplasm. The protein localises to the cytoskeleton. It localises to the microtubule organizing center. It is found in the centrosome. Its subcellular location is the centriole. The protein resides in the cilium basal body. Centriole wall protein that localizes to mature centrioles and regulates centriole and cilia biogenesis. Involved in centrosome duplication: required for efficient PLK4 centrosomal localization and PLK4-induced overduplication of centrioles. Involved in cilium biogenesis and controls cilium length. Acts as a regulator of protein stability by preventing ubiquitination of centrosomal proteins, such as CCP110 and tektins. Associates with the EDVP complex, preventing ubiquitination and degradation of CCP110. Promotes deubiquitination of tektin proteins (TEKT1, TEKT2, TEK3, TEKT4 and TEKT5) via its interaction with USP16. The chain is Centrosomal protein of 78 kDa from Homo sapiens (Human).